The chain runs to 81 residues: Cytotoxin 4N (81 aa).

Residues 1–21 (MKTLLLTLVVVTIVCLDLGYT) form the signal peptide. 4 disulfide bridges follow: Cys-24-Cys-42, Cys-35-Cys-59, Cys-63-Cys-74, and Cys-75-Cys-80.

The protein belongs to the three-finger toxin family. Short-chain subfamily. Type IA cytotoxin sub-subfamily. In terms of assembly, monomer in solution; Homodimer and oligomer in the presence of negatively charged lipids forming a pore with a size ranging between 20 and 30 Angstroms. As to expression, expressed by the venom gland.

Its subcellular location is the secreted. It is found in the target cell membrane. Functionally, shows cytolytic activity on many different cells by forming pore in lipid membranes. In vivo, increases heart rate or kills the animal by cardiac arrest. In addition, it binds to heparin with high affinity, interacts with Kv channel-interacting protein 1 (KCNIP1) in a calcium-independent manner, and binds to integrin alpha-V/beta-3 (ITGAV/ITGB3) with moderate affinity. The protein is Cytotoxin 4N of Naja atra (Chinese cobra).